A 470-amino-acid chain; its full sequence is Glutamate--tRNA ligase (470 aa).

Residues 12–22 carry the 'HIGH' region motif; sequence PSPTGIFHVGG. Residues cysteine 103, cysteine 105, cysteine 125, and aspartate 127 each contribute to the Zn(2+) site. The short motif at 236-240 is the 'KMSKS' region element; it reads KLSKR. Position 239 (lysine 239) interacts with ATP.

This sequence belongs to the class-I aminoacyl-tRNA synthetase family. Glutamate--tRNA ligase type 1 subfamily. Monomer. Zn(2+) serves as cofactor.

The protein localises to the cytoplasm. It catalyses the reaction tRNA(Glu) + L-glutamate + ATP = L-glutamyl-tRNA(Glu) + AMP + diphosphate. Its function is as follows. Catalyzes the attachment of glutamate to tRNA(Glu) in a two-step reaction: glutamate is first activated by ATP to form Glu-AMP and then transferred to the acceptor end of tRNA(Glu). This is Glutamate--tRNA ligase from Frankia casuarinae (strain DSM 45818 / CECT 9043 / HFP020203 / CcI3).